The sequence spans 142 residues: Large ribosomal subunit protein uL11 (142 aa).

It belongs to the universal ribosomal protein uL11 family. Part of the ribosomal stalk of the 50S ribosomal subunit. Interacts with L10 and the large rRNA to form the base of the stalk. L10 forms an elongated spine to which L12 dimers bind in a sequential fashion forming a multimeric L10(L12)X complex. Post-translationally, one or more lysine residues are methylated.

Forms part of the ribosomal stalk which helps the ribosome interact with GTP-bound translation factors. This chain is Large ribosomal subunit protein uL11, found in Xylella fastidiosa (strain Temecula1 / ATCC 700964).